A 577-amino-acid chain; its full sequence is External alternative NAD(P)H-ubiquinone oxidoreductase B1, mitochondrial (577 aa).

The N-terminal 35 residues, 1 to 35 (MRGFTYLSKVLHSHSSYSKLLVLCSVSTGGLLVYA), are a transit peptide targeting the mitochondrion. Residue 57–87 (RVVVLGTGWGGTSFLKDVDISSYDVQVVSPR) coordinates FAD. 221 to 257 (LHFVIVGGGPTGVEFAAELHDYVYEDLVKIYPSVKDF) serves as a coordination point for NAD(+). Residues 378–413 (KVMEDISAIFKAADKDDSGTLSIEEFRDVLEDIIIR) enclose the EF-hand domain. Ca(2+)-binding residues include D391, D393, S395, T397, and E402. Residues 568–577 (YIFGRDSSRI) carry the Microbody targeting signal motif.

It belongs to the NADH dehydrogenase family. Requires FAD as cofactor.

The protein resides in the mitochondrion inner membrane. It localises to the peroxisome. It carries out the reaction a quinone + NADH + H(+) = a quinol + NAD(+). The catalysed reaction is a ubiquinone + NADH + H(+) = a ubiquinol + NAD(+). Activity is calcium-dependent with a more pronounced effect at higher pH. In terms of biological role, alternative NADH-ubiquinone oxidoreductase which catalyzes the oxidation of mitochondrial NADH does not translocate protons across the inner mitochondrial membrane. Calcium-dependent NAD(P)H dehydrogenase. Binds calcium ions. The protein is External alternative NAD(P)H-ubiquinone oxidoreductase B1, mitochondrial (NDB1) of Solanum tuberosum (Potato).